A 226-amino-acid polypeptide reads, in one-letter code: Reticulon-like protein B16 (226 aa).

One can recognise a Reticulon domain in the interval 41–224 (AADLLLWRRR…RLSWSLSKDK (184 aa)). Helical transmembrane passes span 54–74 (LGVI…GLPF), 75–95 (LSVS…HARV), and 149–169 (VVIC…CTLL).

The protein resides in the endoplasmic reticulum membrane. The protein is Reticulon-like protein B16 (RTNLB16) of Arabidopsis thaliana (Mouse-ear cress).